We begin with the raw amino-acid sequence, 853 residues long: DNA mismatch repair protein MutS (853 aa).

ATP is bound at residue 614–621 (GPNMGGKS).

Belongs to the DNA mismatch repair MutS family.

This protein is involved in the repair of mismatches in DNA. It is possible that it carries out the mismatch recognition step. This protein has a weak ATPase activity. The chain is DNA mismatch repair protein MutS from Escherichia coli (strain 55989 / EAEC).